Here is a 1415-residue protein sequence, read N- to C-terminus: Bridge-like lipid transfer protein family member 3B (1415 aa).

The region spanning 3-94 is the Chorein N-terminal domain; the sequence is GLIKKQILKH…DKVIMEMSTC (92 aa). Disordered stretches follow at residues 267-300 and 882-904; these read STEQ…STTP and KSPL…SEGV. The segment covering 275–300 has biased composition (polar residues); the sequence is ASETTQSPTPPVSSQQVKNPQTSTTP. Residues 1367 to 1404 are a coiled coil; sequence KAAGISKEQLVEENECLKQELAKTKMALAESHMERDRL.

It localises to the cytoplasm. Its subcellular location is the cytosol. The protein localises to the early endosome. In terms of biological role, tube-forming lipid transport protein which mediates the transfer of lipids between membranes at organelle contact sites. Required for retrograde traffic of vesicle clusters in the early endocytic pathway to the Golgi complex. This chain is Bridge-like lipid transfer protein family member 3B (bltp3b), found in Xenopus laevis (African clawed frog).